The chain runs to 405 residues: Accessory Sec system protein translocase subunit SecY2 (405 aa).

The next 10 membrane-spanning stretches (helical) occupy residues 14–34, 65–85, 104–124, 131–151, 156–176, 190–210, 243–263, 285–305, 343–363, and 368–388; these read MCTL…LPFV, LFSI…MFSF, MYLT…NLPV, FLVF…LVWL, ATIG…ASLP, LGLL…VVLF, GMPY…LLLL, PLWI…FAFV, FALI…LFVL, and LLKV…LFTI.

The protein belongs to the SecY/SEC61-alpha family. SecY2 subfamily. As to quaternary structure, component of the accessory SecA2/SecY2 protein translocase complex required to export cell wall proteins. May form heterotrimers with SecE and SecG subunits.

The protein localises to the cell membrane. Part of the accessory SecA2/SecY2 system specifically required for export of possible cell wall proteins. The central subunit of a protein translocation channel. This Streptococcus oralis (strain Uo5) protein is Accessory Sec system protein translocase subunit SecY2.